The sequence spans 205 residues: uncharacterized protein (205 aa).

Positions 10–75 (QDLLSAVDQQ…AANLMTVMTD (66 aa)) form a coiled coil. Positions 108–141 (MPLPSSNTNNDQTSPPASGKTSETPKKNPTNAMF) are disordered. Residues 111–141 (PSSNTNNDQTSPPASGKTSETPKKNPTNAMF) show a composition bias toward polar residues.

This sequence belongs to the asfivirus K205R family.

The protein localises to the host cytoplasm. Its function is as follows. Induces host endoplasmic reticulum stress and consequently activates autophagy and NF-kappa-B signaling pathway. In turn, may induce autophagy-mediated STING1 degradation and innate immune evasion. This is an uncharacterized protein from Ornithodoros (relapsing fever ticks).